Reading from the N-terminus, the 210-residue chain is Dynactin-associated protein (210 aa).

At 1 to 113 (MVADIKGNEQ…YCRNDWSMWK (113 aa)) the chain is on the cytoplasmic side. The chain crosses the membrane as a helical; Signal-anchor for type II membrane protein span at residues 114 to 134 (VFLACLLACVIMTAIGVLIIC). At 135–210 (LVNNKGSANS…PITVAPTDHL (76 aa)) the chain is on the extracellular side. The interval 168–210 (ACPPTMTTTSTVPASTATESTTSTATAATTSTEPITVAPTDHL) is disordered. The segment covering 171-203 (PTMTTTSTVPASTATESTTSTATAATTSTEPIT) has biased composition (low complexity).

As to quaternary structure, interacts with DCTN1 and DCTN2. As to expression, expressed in fibroblast and numerous cancer cell lines (at protein level).

The protein resides in the golgi apparatus membrane. Its subcellular location is the cell membrane. Its function is as follows. Plays a role in the regulation of cell proliferation. Promotes activation of the AKT1 signaling pathway. Promotes phosphorylation of AKT1 at 'Ser-473'. The polypeptide is Dynactin-associated protein (DYNAP) (Homo sapiens (Human)).